We begin with the raw amino-acid sequence, 64 residues long: Large ribosomal subunit protein bL35 (64 aa).

The tract at residues 1-41 (MPKMKSHSGASKRFKVSGKGKLLRQQANRRHLLEHKPSRRT) is disordered.

Belongs to the bacterial ribosomal protein bL35 family.

The polypeptide is Large ribosomal subunit protein bL35 (Nocardia farcinica (strain IFM 10152)).